Here is a 201-residue protein sequence, read N- to C-terminus: Large ribosomal subunit protein uL4 (201 aa).

The interval Gln46–Gly71 is disordered.

It belongs to the universal ribosomal protein uL4 family. Part of the 50S ribosomal subunit.

Functionally, one of the primary rRNA binding proteins, this protein initially binds near the 5'-end of the 23S rRNA. It is important during the early stages of 50S assembly. It makes multiple contacts with different domains of the 23S rRNA in the assembled 50S subunit and ribosome. Its function is as follows. Forms part of the polypeptide exit tunnel. This Shewanella woodyi (strain ATCC 51908 / MS32) protein is Large ribosomal subunit protein uL4.